The following is a 548-amino-acid chain: Alpha-1,3-mannosyl-glycoprotein 4-beta-N-acetylglucosaminyltransferase B (548 aa).

The Cytoplasmic segment spans residues 1–7 (MRLRNGT). Residues 8 to 28 (FLTLLLFCLCAFLSLSWYAAL) form a helical; Signal-anchor for type II membrane protein membrane-spanning segment. Over 29–548 (SGQKGDVVDI…LSEIFLKKAD (520 aa)) the chain is Lumenal. Residues 36–83 (VDIYQREFLALRDRLHAAEQESLKRSKELNLVLEEIKRAVSERQALRD) are a coiled coil. 2 N-linked (GlcNAc...) asparagine glycosylation sites follow: N87 and N103.

It belongs to the glycosyltransferase 54 family. Interacts with SLC35A3. The cofactor is a divalent metal cation. N-glycosylated.

The protein resides in the golgi apparatus membrane. The enzyme catalyses N(4)-{beta-D-GlcNAc-(1-&gt;2)-alpha-D-Man-(1-&gt;3)-[beta-D-GlcNAc-(1-&gt;2)-alpha-D-Man-(1-&gt;6)]-beta-D-Man-(1-&gt;4)-beta-D-GlcNAc-(1-&gt;4)-beta-D-GlcNAc}-L-asparaginyl-[protein] + UDP-N-acetyl-alpha-D-glucosamine = N(4)-{beta-D-GlcNAc-(1-&gt;2)-[beta-D-GlcNAc-(1-&gt;4)]-alpha-D-Man-(1-&gt;3)-[beta-D-GlcNAc-(1-&gt;2)-alpha-D-Man-(1-&gt;6)]-beta-D-Man-(1-&gt;4)-beta-D-GlcNAc-(1-&gt;4)-beta-D-GlcNAc}-L-asparaginyl-[protein] + UDP + H(+). It carries out the reaction an N(4)-{beta-D-GlcNAc-(1-&gt;2)-alpha-D-Man-(1-&gt;3)-[alpha-D-Man-(1-&gt;6)]-beta-D-Man-(1-&gt;4)-beta-D-GlcNAc-(1-&gt;4)-beta-D-GlcNAc}-L-asparaginyl-[protein] + UDP-N-acetyl-alpha-D-glucosamine = an N(4)-{beta-D-GlcNAc-(1-&gt;2)-[beta-D-GlcNAc-(1-&gt;4)]-alpha-D-Man-(1-&gt;3)-[alpha-D-Man-(1-&gt;6)]-beta-D-Man-(1-&gt;4)-beta-D-GlcNAc-(1-&gt;4)-beta-D-GlcNAc}-L-asparaginyl-[protein] + UDP + H(+). The catalysed reaction is an N(4)-{beta-D-GlcNAc-(1-&gt;2)-alpha-D-Man-(1-&gt;3)-[beta-D-GlcNAc-(1-&gt;2)-[beta-D-GlcNAc-(1-&gt;6)]-alpha-D-Man-(1-&gt;6)]-beta-D-Man-(1-&gt;4)-beta-D-GlcNAc-(1-&gt;4)-beta-D-GlcNAc}-L-asparaginyl-[protein] + UDP-N-acetyl-alpha-D-glucosamine = an N(4)-{beta-D-GlcNAc-(1-&gt;2)-[beta-D-GlcNAc-(1-&gt;4)]-alpha-D-Man-(1-&gt;3)-[beta-D-GlcNAc-(1-&gt;2)-[beta-D-GlcNAc-(1-&gt;6)]-alpha-D-Man-(1-&gt;6)]-beta-D-Man-(1-&gt;4)-beta-D-GlcNAc-(1-&gt;4)-beta-D-GlcNAc}-L-asparaginyl-[protein] + UDP + H(+). It catalyses the reaction an N(4)-{beta-D-GlcNAc-(1-&gt;2)-alpha-D-Man-(1-&gt;3)-[beta-D-GlcNAc-(1-&gt;2)-alpha-D-Man-(1-&gt;6)]-beta-D-Man-(1-&gt;4)-beta-D-GlcNAc-(1-&gt;4)-[alpha-L-Fuc-(1-&gt;6)]-beta-D-GlcNAc}-L-asparaginyl-[protein] + UDP-N-acetyl-alpha-D-glucosamine = N(4)-{beta-D-GlcNAc-(1-&gt;2)-[beta-D-GlcNAc-(1-&gt;4)]-alpha-D-Man-(1-&gt;3)-[beta-D-GlcNAc-(1-&gt;2)-alpha-D-Man-(1-&gt;6)]-beta-D-Man-(1-&gt;4)-beta-D-GlcNAc-(1-&gt;4)-[alpha-L-Fuc-(1-&gt;6)]-beta-D-GlcNAc}-asparaginyl-[protein] + UDP + H(+). The enzyme catalyses an N(4)-{beta-D-GlcNAc-(1-&gt;2)-alpha-D-Man-(1-&gt;3)-[beta-D-Gal-(1-&gt;4)-beta-D-GlcNAc-(1-&gt;2)-alpha-D-Man-(1-&gt;6)]-beta-D-Man-(1-&gt;4)-beta-D-GlcNAc-(1-&gt;4)-beta-D-GlcNAc}-L-asparaginyl-[protein] + UDP-N-acetyl-alpha-D-glucosamine = an N(4)-{beta-D-GlcNAc-(1-&gt;2)-[beta-D-GlcNAc-(1-&gt;4)]-alpha-D-Man-(1-&gt;3)-[beta-D-Gal-(1-&gt;4)-beta-D-GlcNAc-(1-&gt;2)-alpha-D-Man-(1-&gt;6)]-beta-D-Man-(1-&gt;4)-beta-D-GlcNAc-(1-&gt;4)-beta-D-GlcNAc}-L-asparaginyl-[protein] + UDP + H(+). It carries out the reaction N(4)-{beta-D-GlcNAc-(1-&gt;2)-alpha-D-Man-(1-&gt;3)-[alpha-D-Man-(1-&gt;3)-{alpha-D-Man-(1-&gt;6)}-alpha-D-Man-(1-&gt;6)]-beta-D-Man-(1-&gt;4)-beta-D-GlcNAc-(1-&gt;4)-beta-D-GlcNAc}-asparaginyl-[protein] + UDP-N-acetyl-alpha-D-glucosamine = N(4)-{beta-D-GlcNAc-(1-&gt;2)-[beta-D-GlcNAc-(1-&gt;4)]-alpha-D-Man-(1-&gt;3)-[alpha-D-Man-(1-&gt;3)-{alpha-D-Man-(1-&gt;6)}-alpha-D-Man-(1-&gt;6)]-beta-D-Man-(1-&gt;4)-beta-D-GlcNAc-(1-&gt;4)-beta-D-GlcNAc}-asparaginyl-[protein] + UDP + H(+). The catalysed reaction is N(4)-{beta-D-GlcNAc-(1-&gt;2)-alpha-D-Man-(1-&gt;3)-beta-D-Man-(1-&gt;4)-beta-D-GlcNAc-(1-&gt;4)-beta-D-GlcNAc}-asparaginyl-[protein] + UDP-N-acetyl-alpha-D-glucosamine = N(4)-{beta-D-GlcNAc-(1-&gt;2)-[beta-D-GlcNAc-(1-&gt;4)]-alpha-D-Man-(1-&gt;3)-beta-D-Man-(1-&gt;4)-beta-D-GlcNAc-(1-&gt;4)-beta-D-GlcNAc}-asparaginyl-[protein] + UDP + H(+). Its pathway is protein modification; protein glycosylation. Glycosyltransferase that catalyzes the transfer of GlcNAc from UDP-GlcNAc to the GlcNAcbeta1-2Manalpha1-3 arm of the core structure of N-linked glycans through a beta1-4 linkage and participates in the production of tri- and tetra-antennary N-linked sugar chains. Prefers complex-type N-glycans over hybrid-types. Has lower affinities for donors or acceptors than MGAT4A, suggesting that, under physiological conditions, it is not the main contributor in N-glycan biosynthesis. This Mus musculus (Mouse) protein is Alpha-1,3-mannosyl-glycoprotein 4-beta-N-acetylglucosaminyltransferase B.